The following is a 380-amino-acid chain: Flap endonuclease 1 (380 aa).

The tract at residues 1-104 (MGIQGLAKLI…GELAKRAERR (104 aa)) is N-domain. Position 34 (Asp-34) interacts with Mg(2+). The DNA site is built by Arg-47 and Arg-70. The Mg(2+) site is built by Asp-86, Glu-158, Glu-160, Asp-179, and Asp-181. Positions 122–253 (DVNKFQKRLV…KRAIELIRQY (132 aa)) are I-domain. Glu-158 lines the DNA pocket. Residues Gly-231 and Asp-233 each contribute to the DNA site. Residue Asp-233 coordinates Mg(2+). The interval 328–380 (LKNARHTSTQGRLDSFFKVMSSPSVKRKEPPKGAKGSASKKAKMSGGKFKKPK) is disordered. Positions 336-344 (TQGRLDSFF) are interaction with PCNA. Positions 365–380 (ASKKAKMSGGKFKKPK) are enriched in basic residues.

It belongs to the XPG/RAD2 endonuclease family. FEN1 subfamily. As to quaternary structure, interacts with PCNA. Three molecules of FEN1 bind to one PCNA trimer with each molecule binding to one PCNA monomer. PCNA stimulates the nuclease activity without altering cleavage specificity. Mg(2+) is required as a cofactor. In terms of processing, phosphorylated. Phosphorylation upon DNA damage induces relocalization to the nuclear plasma.

It localises to the nucleus. Its subcellular location is the nucleolus. It is found in the nucleoplasm. The protein resides in the mitochondrion. Its function is as follows. Structure-specific nuclease with 5'-flap endonuclease and 5'-3' exonuclease activities involved in DNA replication and repair. During DNA replication, cleaves the 5'-overhanging flap structure that is generated by displacement synthesis when DNA polymerase encounters the 5'-end of a downstream Okazaki fragment. It enters the flap from the 5'-end and then tracks to cleave the flap base, leaving a nick for ligation. Also involved in the long patch base excision repair (LP-BER) pathway, by cleaving within the apurinic/apyrimidinic (AP) site-terminated flap. Acts as a genome stabilization factor that prevents flaps from equilibrating into structures that lead to duplications and deletions. Also possesses 5'-3' exonuclease activity on nicked or gapped double-stranded DNA, and exhibits RNase H activity. Also involved in replication and repair of rDNA and in repairing mitochondrial DNA. The sequence is that of Flap endonuclease 1 from Branchiostoma floridae (Florida lancelet).